The sequence spans 237 residues: UDP-Gal:alpha-D-GlcNAc-diphosphoundecaprenol beta-1,4-galactosyltransferase (237 aa).

Catalysis depends on Glu101, which acts as the Nucleophile.

The protein belongs to the glycosyltransferase 26 family. The cofactor is Mn(2+). Ni(2+) is required as a cofactor. It depends on Pb(2+) as a cofactor.

It catalyses the reaction N-acetyl-alpha-D-glucosaminyl-di-trans,octa-cis-undecaprenyl diphosphate + UDP-alpha-D-galactose = beta-D-Gal-(1-&gt;4)-alpha-D-GlcNAc-di-trans,octa-cis-undecaprenyl diphosphate + UDP + H(+). It functions in the pathway bacterial outer membrane biogenesis; LPS O-antigen biosynthesis. Functionally, galactosyltransferase that adds one galactose residue in the beta-1-4 linkage to GlcNAc-alpha-pyrophosphate-lipid in the biosynthesis of the O-polysaccharide repeating unit of the O antigen. This is UDP-Gal:alpha-D-GlcNAc-diphosphoundecaprenol beta-1,4-galactosyltransferase (wfeD) from Shigella boydii.